The primary structure comprises 664 residues: Tripartite terminase subunit 1 (664 aa).

The C3H1-type zinc-finger motif lies at 205 to 233 (CHVCFEELCVTANQGATASRRLAGKICDH). Disordered stretches follow at residues 273–295 (SKMTEANSGGPAEAPGPAAAQER) and 440–466 (HAAEDPPGDGNAEKEARRAPSLGGGPE). A compositionally biased stretch (low complexity) spans 281 to 292 (GGPAEAPGPAAA).

The protein belongs to the herpesviridae TRM1 protein family. As to quaternary structure, associates with TRM2 and TRM3 to form the tripartite terminase complex. Interacts with portal protein.

It is found in the host nucleus. Component of the molecular motor that translocates viral genomic DNA in empty capsid during DNA packaging. Forms a tripartite terminase complex together with TRM2 and TRM3 in the host cytoplasm. Once the complex reaches the host nucleus, it interacts with the capsid portal vertex. This portal forms a ring in which genomic DNA is translocated into the capsid. TRM1 carries an endonuclease activity that plays an important role for the cleavage of concatemeric viral DNA into unit length genomes. This Bos taurus (Bovine) protein is Tripartite terminase subunit 1.